We begin with the raw amino-acid sequence, 93 residues long: Co-chaperonin GroES (93 aa).

It belongs to the GroES chaperonin family. Heptamer of 7 subunits arranged in a ring. Interacts with the chaperonin GroEL.

It localises to the cytoplasm. Together with the chaperonin GroEL, plays an essential role in assisting protein folding. The GroEL-GroES system forms a nano-cage that allows encapsulation of the non-native substrate proteins and provides a physical environment optimized to promote and accelerate protein folding. GroES binds to the apical surface of the GroEL ring, thereby capping the opening of the GroEL channel. This chain is Co-chaperonin GroES, found in Streptococcus constellatus.